The sequence spans 321 residues: Manganese-dependent ADP-ribose/CDP-alcohol diphosphatase (321 aa).

Residues Asp25, Gln27, Asp72, Asn107, His226, His263, and His265 each contribute to the Zn(2+) site.

It belongs to the ADPRibase-Mn family. In terms of assembly, monomer. Requires Mg(2+) as cofactor.

It carries out the reaction CDP-choline + H2O = phosphocholine + CMP + 2 H(+). The catalysed reaction is ADP-D-ribose + H2O = D-ribose 5-phosphate + AMP + 2 H(+). It catalyses the reaction CDP-glycerol + H2O = sn-glycerol 3-phosphate + CMP + 2 H(+). Hydrolyzes ADP-ribose, IDP-ribose, CDP-glycerol, CDP-choline and CDP-ethanolamine, but not other non-reducing ADP-sugars or CDP-glucose. The polypeptide is Manganese-dependent ADP-ribose/CDP-alcohol diphosphatase (Oryza sativa subsp. japonica (Rice)).